The sequence spans 634 residues: Frizzled and smoothened-like protein D (634 aa).

A signal peptide spans 1 to 21 (MINKFKFYLIFLKLILILVNC). Over 22–257 (QNSLNDYGFG…QMDSVINMSK (236 aa)) the chain is Extracellular. The 145-residue stretch at 34–178 (DESSICTSYI…LTKYGYTANG (145 aa)) folds into the FZ domain. N126, N168, N215, N243, and N254 each carry an N-linked (GlcNAc...) asparagine glycan. A helical membrane pass occupies residues 258–278 (AMSSISFVLSLFNVITFGLLI). Residues 279-287 (KKKSKYNVC) lie on the Cytoplasmic side of the membrane. Residues 288 to 308 (IALMAIGSSFIYLSDIINYGV) form a helical membrane-spanning segment. Residues 309–335 (GIEKQLCPEPGRVATQRVDSLCGFTGS) are Extracellular-facing. The helical transmembrane segment at 336–356 (IFHIGITLCVLWSMTMGIVLY) threads the bilayer. Residues 357 to 368 (SKIKQFKLPNFR) are Cytoplasmic-facing. A helical membrane pass occupies residues 369–389 (YFLIGNLSFTVVTLIILASAK). At 390-410 (KFQGGNGFLECWMRDRWYVVA) the chain is on the extracellular side. A helical membrane pass occupies residues 411 to 431 (IFWIPCGIALLLGVLSICGVI). The Cytoplasmic segment spans residues 432-454 (FEIYKISKNVSLKDSKVVIRELK). A helical transmembrane segment spans residues 455 to 475 (PFVLVVTVSASLIYLFVFYFD). Over 476–513 (SESKYDFYKKGVEDYILCLLTSENPLDECYTVGPNFNS) the chain is Extracellular. Residues 514 to 534 (YFMFYFLIRFFGILFFGIFGT) form a helical membrane-spanning segment. Topologically, residues 535–634 (SEIARNAWTE…MEIELDSIDI (100 aa)) are cytoplasmic. The interval 560–624 (VSSSTRGGGG…NNNNNDNNNK (65 aa)) is disordered. 2 stretches are compositionally biased toward low complexity: residues 572-592 (SGIKSSSSSSNSGVCNNNNST) and 609-622 (DNTIITNNNNNDNN).

The protein belongs to the G-protein coupled receptor Fz/Smo family.

It localises to the membrane. The polypeptide is Frizzled and smoothened-like protein D (fslD) (Dictyostelium discoideum (Social amoeba)).